Reading from the N-terminus, the 308-residue chain is ADP-L-glycero-D-manno-heptose-6-epimerase (308 aa).

NADP(+) is bound by residues 10-11 (FI), 31-32 (DN), Lys-38, Lys-53, 75-79 (EGACS), and Asn-92. The Proton acceptor role is filled by Tyr-139. An NADP(+)-binding site is contributed by Lys-143. Residue Asn-168 coordinates substrate. Residues Val-169 and Lys-177 each contribute to the NADP(+) site. Lys-177 serves as the catalytic Proton acceptor. Residues Ser-179, His-186, 200–203 (FAGS), Arg-208, and Tyr-271 contribute to the substrate site.

The protein belongs to the NAD(P)-dependent epimerase/dehydratase family. HldD subfamily. Homopentamer. NADP(+) is required as a cofactor.

The enzyme catalyses ADP-D-glycero-beta-D-manno-heptose = ADP-L-glycero-beta-D-manno-heptose. The protein operates within nucleotide-sugar biosynthesis; ADP-L-glycero-beta-D-manno-heptose biosynthesis; ADP-L-glycero-beta-D-manno-heptose from D-glycero-beta-D-manno-heptose 7-phosphate: step 4/4. In terms of biological role, catalyzes the interconversion between ADP-D-glycero-beta-D-manno-heptose and ADP-L-glycero-beta-D-manno-heptose via an epimerization at carbon 6 of the heptose. The sequence is that of ADP-L-glycero-D-manno-heptose-6-epimerase from Haemophilus influenzae (strain PittGG).